A 242-amino-acid polypeptide reads, in one-letter code: ATP synthase subunit a (242 aa).

6 helical membrane-spanning segments follow: residues 29-49 (SAAYMLLASVLALTYFYLAFS), 84-104 (FVPVIFTLFVFILFCNLFGMI), 114-134 (IIITFALAILVFLMVTIVGFV), 140-160 (FLSLFLPHGTPLWLAPLMIII), 189-209 (VIASFVITLMIYLKFLPIPLM), and 210-230 (VILIGFEIFVAILQAYIFTIL).

This sequence belongs to the ATPase A chain family. As to quaternary structure, F-type ATPases have 2 components, CF(1) - the catalytic core - and CF(0) - the membrane proton channel. CF(1) has five subunits: alpha(3), beta(3), gamma(1), delta(1), epsilon(1). CF(0) has three main subunits: a(1), b(2) and c(9-12). The alpha and beta chains form an alternating ring which encloses part of the gamma chain. CF(1) is attached to CF(0) by a central stalk formed by the gamma and epsilon chains, while a peripheral stalk is formed by the delta and b chains.

The protein resides in the cell inner membrane. Key component of the proton channel; it plays a direct role in the translocation of protons across the membrane. The protein is ATP synthase subunit a of Rickettsia bellii (strain OSU 85-389).